A 600-amino-acid polypeptide reads, in one-letter code: ATP-dependent lipid A-core flippase (600 aa).

Helical transmembrane passes span T28–I48, V80–F100, A159–F179, W182–V202, V267–A287, and E295–I315. Positions L29–R327 constitute an ABC transmembrane type-1 domain. Residues L359 to M596 form the ABC transporter domain. G393–S400 is an ATP binding site.

Belongs to the ABC transporter superfamily. Lipid exporter (TC 3.A.1.106) family. In terms of assembly, homodimer.

Its subcellular location is the cell inner membrane. The enzyme catalyses ATP + H2O + lipid A-core oligosaccharideSide 1 = ADP + phosphate + lipid A-core oligosaccharideSide 2.. Involved in lipopolysaccharide (LPS) biosynthesis. Translocates lipid A-core from the inner to the outer leaflet of the inner membrane. Transmembrane domains (TMD) form a pore in the inner membrane and the ATP-binding domain (NBD) is responsible for energy generation. This is ATP-dependent lipid A-core flippase from Shewanella denitrificans (strain OS217 / ATCC BAA-1090 / DSM 15013).